The chain runs to 614 residues: DNA mismatch repair protein MutL (614 aa).

It belongs to the DNA mismatch repair MutL/HexB family.

Functionally, this protein is involved in the repair of mismatches in DNA. It is required for dam-dependent methyl-directed DNA mismatch repair. May act as a 'molecular matchmaker', a protein that promotes the formation of a stable complex between two or more DNA-binding proteins in an ATP-dependent manner without itself being part of a final effector complex. The polypeptide is DNA mismatch repair protein MutL (Leptospira biflexa serovar Patoc (strain Patoc 1 / ATCC 23582 / Paris)).